A 71-amino-acid chain; its full sequence is General transcription factor IIH subunit 5 (71 aa).

The residue at position 69 (Thr69) is a Phosphothreonine.

It belongs to the TFB5 family. Component of the 7-subunit TFIIH core complex composed of XPB/ERCC3, XPD/ERCC2, GTF2H1, GTF2H2, GTF2H3, GTF2H4 and GTF2H5, which is active in NER. The core complex associates with the 3-subunit CDK-activating kinase (CAK) module composed of CCNH/cyclin H, CDK7 and MNAT1 to form the 10-subunit holoenzyme (holo-TFIIH) active in transcription. Part of TBP-based Pol II pre-initiation complex (PIC), in which Pol II core assembles with general transcription factors and other specific initiation factors including GTF2E1, GTF2E2, GTF2F1, GTF2F2, TCEA1, ERCC2, ERCC3, GTF2H2, GTF2H3, GTF2H4, GTF2H5, GTF2A1, GTF2A2, GTF2B and TBP; this large multi-subunit PIC complex mediates DNA unwinding and targets Pol II core to the transcription start site where the first phosphodiester bond forms.

It is found in the nucleus. The protein resides in the cytoplasm. Functionally, component of the general transcription and DNA repair factor IIH (TFIIH) core complex, which is involved in general and transcription-coupled nucleotide excision repair (NER) of damaged DNA and, when complexed to CAK, in RNA transcription by RNA polymerase II. In NER, TFIIH acts by opening DNA around the lesion to allow the excision of the damaged oligonucleotide and its replacement by a new DNA fragment. In transcription, TFIIH has an essential role in transcription initiation. When the pre-initiation complex (PIC) has been established, TFIIH is required for promoter opening and promoter escape. Phosphorylation of the C-terminal tail (CTD) of the largest subunit of RNA polymerase II by the kinase module CAK controls the initiation of transcription. Necessary for the stability of the TFIIH complex and for the presence of normal levels of TFIIH in the cell. This is General transcription factor IIH subunit 5 from Homo sapiens (Human).